We begin with the raw amino-acid sequence, 327 residues long: Phosphate acyltransferase (327 aa).

The protein belongs to the PlsX family. In terms of assembly, homodimer. Probably interacts with PlsY.

It is found in the cytoplasm. The catalysed reaction is a fatty acyl-[ACP] + phosphate = an acyl phosphate + holo-[ACP]. Its pathway is lipid metabolism; phospholipid metabolism. Catalyzes the reversible formation of acyl-phosphate (acyl-PO(4)) from acyl-[acyl-carrier-protein] (acyl-ACP). This enzyme utilizes acyl-ACP as fatty acyl donor, but not acyl-CoA. This Mycoplasma mobile (strain ATCC 43663 / 163K / NCTC 11711) (Mesomycoplasma mobile) protein is Phosphate acyltransferase.